Reading from the N-terminus, the 101-residue chain is Small ribosomal subunit protein uS14 (101 aa).

It belongs to the universal ribosomal protein uS14 family. In terms of assembly, part of the 30S ribosomal subunit. Contacts proteins S3 and S10.

Binds 16S rRNA, required for the assembly of 30S particles and may also be responsible for determining the conformation of the 16S rRNA at the A site. This Orientia tsutsugamushi (strain Ikeda) (Rickettsia tsutsugamushi) protein is Small ribosomal subunit protein uS14.